The chain runs to 508 residues: ATP synthase subunit alpha, chloroplastic (508 aa).

170–177 (GDRQTGKT) lines the ATP pocket.

This sequence belongs to the ATPase alpha/beta chains family. In terms of assembly, F-type ATPases have 2 components, F(1) - the catalytic core - and F(0) - the membrane proton channel. F(1) has five subunits: alpha(3), beta(3), gamma(1), delta(1), epsilon(1). F(0) has four main subunits: a(1), b(1), b'(1) and c(10-14). The alpha and beta chains form an alternating ring which encloses part of the gamma chain. F(1) is attached to F(0) by a central stalk formed by the gamma and epsilon chains, while a peripheral stalk is formed by the delta, b and b' chains.

It localises to the plastid. Its subcellular location is the chloroplast thylakoid membrane. It catalyses the reaction ATP + H2O + 4 H(+)(in) = ADP + phosphate + 5 H(+)(out). In terms of biological role, f(1)F(0) ATP synthase produces ATP from ADP in the presence of a proton or sodium gradient. F-type ATPases consist of two structural domains, F(1) containing the extramembraneous catalytic core and F(0) containing the membrane proton channel, linked together by a central stalk and a peripheral stalk. During catalysis, ATP synthesis in the catalytic domain of F(1) is coupled via a rotary mechanism of the central stalk subunits to proton translocation. Its function is as follows. The alpha chain is a regulatory subunit. This is ATP synthase subunit alpha, chloroplastic from Chlamydomonas reinhardtii (Chlamydomonas smithii).